The sequence spans 213 residues: ATP-dependent dethiobiotin synthetase BioD 2 (213 aa).

13 to 18 is a binding site for ATP; the sequence is DIGKTI. Position 17 (Thr17) interacts with Mg(2+). Residue Lys38 is part of the active site. Position 42 (Thr42) interacts with substrate. Residues Asp50 and 115 to 118 contribute to the ATP site; that span reads EGAG. Mg(2+)-binding residues include Asp50 and Glu115.

The protein belongs to the dethiobiotin synthetase family. Homodimer. Mg(2+) serves as cofactor.

It is found in the cytoplasm. It catalyses the reaction (7R,8S)-7,8-diammoniononanoate + CO2 + ATP = (4R,5S)-dethiobiotin + ADP + phosphate + 3 H(+). It participates in cofactor biosynthesis; biotin biosynthesis; biotin from 7,8-diaminononanoate: step 1/2. Catalyzes a mechanistically unusual reaction, the ATP-dependent insertion of CO2 between the N7 and N8 nitrogen atoms of 7,8-diaminopelargonic acid (DAPA, also called 7,8-diammoniononanoate) to form a ureido ring. The protein is ATP-dependent dethiobiotin synthetase BioD 2 of Pasteurella multocida (strain Pm70).